The primary structure comprises 379 residues: Cytochrome b (379 aa).

4 helical membrane passes run 34–54 (FGSL…LLAM), 78–99 (WFIR…YLHI), 114–134 (WNTG…GYVL), and 179–199 (FFAL…VHLT). Positions 84 and 98 each coordinate heme b. H183 and H197 together coordinate heme b. H202 contacts a ubiquinone. Transmembrane regions (helical) follow at residues 227 to 247 (LKDI…AFFS), 289 to 309 (LGGV…PLLH), 321 to 341 (LSQL…WIGS), and 348 to 368 (FIII…VLFP).

The protein belongs to the cytochrome b family. The cytochrome bc1 complex contains 11 subunits: 3 respiratory subunits (MT-CYB, CYC1 and UQCRFS1), 2 core proteins (UQCRC1 and UQCRC2) and 6 low-molecular weight proteins (UQCRH/QCR6, UQCRB/QCR7, UQCRQ/QCR8, UQCR10/QCR9, UQCR11/QCR10 and a cleavage product of UQCRFS1). This cytochrome bc1 complex then forms a dimer. Requires heme b as cofactor.

Its subcellular location is the mitochondrion inner membrane. Its function is as follows. Component of the ubiquinol-cytochrome c reductase complex (complex III or cytochrome b-c1 complex) that is part of the mitochondrial respiratory chain. The b-c1 complex mediates electron transfer from ubiquinol to cytochrome c. Contributes to the generation of a proton gradient across the mitochondrial membrane that is then used for ATP synthesis. The polypeptide is Cytochrome b (MT-CYB) (Struthio camelus (Common ostrich)).